Here is a 303-residue protein sequence, read N- to C-terminus: Aspartate carbamoyltransferase catalytic subunit (303 aa).

Carbamoyl phosphate contacts are provided by Arg51 and Thr52. Lys80 contacts L-aspartate. Carbamoyl phosphate-binding residues include Arg101, His129, and Gln132. L-aspartate contacts are provided by Arg162 and Arg221. Carbamoyl phosphate is bound by residues Leu260 and Pro261.

Belongs to the aspartate/ornithine carbamoyltransferase superfamily. ATCase family. Heterooligomer of catalytic and regulatory chains.

The catalysed reaction is carbamoyl phosphate + L-aspartate = N-carbamoyl-L-aspartate + phosphate + H(+). The protein operates within pyrimidine metabolism; UMP biosynthesis via de novo pathway; (S)-dihydroorotate from bicarbonate: step 2/3. Its function is as follows. Catalyzes the condensation of carbamoyl phosphate and aspartate to form carbamoyl aspartate and inorganic phosphate, the committed step in the de novo pyrimidine nucleotide biosynthesis pathway. This chain is Aspartate carbamoyltransferase catalytic subunit, found in Saccharolobus islandicus (strain Y.N.15.51 / Yellowstone #2) (Sulfolobus islandicus).